Consider the following 39-residue polypeptide: Cytochrome b559 subunit beta (39 aa).

A helical transmembrane segment spans residues 14 to 30 (WLAVHGLAIPTVFFLGS). His18 contacts heme.

This sequence belongs to the PsbE/PsbF family. Heterodimer of an alpha subunit and a beta subunit. PSII is composed of 1 copy each of membrane proteins PsbA, PsbB, PsbC, PsbD, PsbE, PsbF, PsbH, PsbI, PsbJ, PsbK, PsbL, PsbM, PsbT, PsbX, PsbY, PsbZ, Psb30/Ycf12, at least 3 peripheral proteins of the oxygen-evolving complex and a large number of cofactors. It forms dimeric complexes. Heme b serves as cofactor.

It is found in the plastid membrane. Functionally, this b-type cytochrome is tightly associated with the reaction center of photosystem II (PSII). PSII is a light-driven water:plastoquinone oxidoreductase that uses light energy to abstract electrons from H(2)O, generating O(2) and a proton gradient subsequently used for ATP formation. It consists of a core antenna complex that captures photons, and an electron transfer chain that converts photonic excitation into a charge separation. The sequence is that of Cytochrome b559 subunit beta from Cuscuta gronovii (Common dodder).